Reading from the N-terminus, the 2157-residue chain is Polyketide synthase 2 (2157 aa).

An N-terminal acylcarrier protein transacylase domain (SAT) region spans residues 7-244; it reads FIFGDQTGGF…IPIPIWAPYH (238 aa). The Ketosynthase family 3 (KS3) domain occupies 374–807; it reads DSKIAIIGMS…GGNSALLLED (434 aa). Catalysis depends on for beta-ketoacyl synthase activity residues C546, H681, and H723. The interval 908 to 1213 is malonyl-CoA:ACP transacylase (MAT) domain; that stretch reads GFVFSGQGAQ…ASLHRKDDGW (306 aa). The For acyl/malonyl transferase activity role is filled by S998. Residues 1290–1605 are product template (PT) domain; it reads TSSVQKIIRQ…RSLLNKVLPP (316 aa). The interval 1294–1428 is N-terminal hotdog fold; that stretch reads QKIIRQTDGP…CLLRFADPTS (135 aa). The PKS/mFAS DH domain occupies 1294–1600; it reads QKIIRQTDGP…FLGMSRSLLN (307 aa). The Proton acceptor; for dehydratase activity role is filled by H1327. The segment at 1455 to 1600 is C-terminal hotdog fold; it reads TDSLLSRGIV…FLGMSRSLLN (146 aa). D1514 acts as the Proton donor; for dehydratase activity in catalysis. The interval 1626-1652 is disordered; the sequence is AASAKDTERRPLDIPTRAQRQPSSAQT. Residues 1643–1652 show a composition bias toward polar residues; that stretch reads AQRQPSSAQT. Residues 1649–1726 enclose the Carrier 1 domain; that stretch reads SAQTGTMGRI…ELKAFLGADQ (78 aa). S1686 bears the O-(pantetheine 4'-phosphoryl)serine mark. A disordered region spans residues 1733–1762; sequence ACESSNGQHTPQTSDKGSGTLAVQKTDDDT. Residues 1735–1755 show a composition bias toward polar residues; that stretch reads ESSNGQHTPQTSDKGSGTLAV. Positions 1765-1839 constitute a Carrier 2 domain; that stretch reads DMTLNRVCAI…SLQKALCGSE (75 aa). The residue at position 1799 (S1799) is an O-(pantetheine 4'-phosphoryl)serine. The disordered stretch occupies residues 1840–1859; it reads AASNGAPEANETTPSSHRLE. Positions 1875-2151 are thioesterase (TE) domain; sequence ASPPHATSIL…MIEMGNLIGE (277 aa). Catalysis depends on S1981, which acts as the For thioesterase activity.

Polyketide synthase; part of the Pks2 gene cluster that mediates the formation of infectious structures (appressoria), enabling these fungi to kill insects faster. The product of the Pks2 gene cluster is different from the one of Pks1 and has still not been identified. This is Polyketide synthase 2 from Metarhizium robertsii (strain ARSEF 23 / ATCC MYA-3075) (Metarhizium anisopliae (strain ARSEF 23)).